The sequence spans 109 residues: Tetraspanin-31 (109 aa).

The Cytoplasmic portion of the chain corresponds to 1 to 12 (MVCGGFACSKNA). Residues 13-33 (LCALNVVYMLVGLLLIGVAAW) form a helical membrane-spanning segment. Over 34 to 44 (AKGLGLVSSIH) the chain is Extracellular. Residues 45 to 65 (IIGGVIAVGVFLLLIAVAGLV) form a helical membrane-spanning segment. At 66–72 (GAVNHHQ) the chain is on the cytoplasmic side. Residues 73 to 93 (VLLFFYMIILGLVFIFQFGIS) form a helical membrane-spanning segment. The Extracellular portion of the chain corresponds to 94 to 109 (CSCLAINLSKQAGIIN). The N-linked (GlcNAc...) asparagine glycan is linked to N100.

The protein belongs to the tetraspanin (TM4SF) family.

It localises to the membrane. The polypeptide is Tetraspanin-31 (TSPAN31) (Sus scrofa (Pig)).